A 284-amino-acid polypeptide reads, in one-letter code: Expansin-A17 (284 aa).

The N-terminal stretch at 1 to 21 (MASSWNNPAIFLAAALAVATA) is a signal peptide. Residues 71–185 (GGACGYVSND…RRVPCQRTGG (115 aa)) enclose the Expansin-like EG45 domain. Residues 195–279 (YWLLLYVMNV…WWITGLCYQG (85 aa)) enclose the Expansin-like CBD domain.

The protein belongs to the expansin family. Expansin A subfamily. In terms of tissue distribution, expressed in roots.

It localises to the secreted. The protein resides in the cell wall. It is found in the membrane. Functionally, may cause loosening and extension of plant cell walls by disrupting non-covalent bonding between cellulose microfibrils and matrix glucans. No enzymatic activity has been found. May be required for rapid internodal elongation in deepwater rice during submergence. This is Expansin-A17 (EXPA17) from Oryza sativa subsp. japonica (Rice).